A 331-amino-acid chain; its full sequence is dTDP-glucose 4,6-dehydratase (331 aa).

Residues 11–12, 33–36, 57–58, 77–81, and Thr96 contribute to the NAD(+) site; these read FI, DALT, DI, and FAAES. Ser81 serves as a coordination point for substrate. Substrate is bound at residue Thr120. The Proton donor role is filled by Asp121. Active-site proton acceptor residues include Glu122 and Tyr147. 147 to 151 is a binding site for NAD(+); the sequence is YSATK. Substrate is bound at residue Asn176. Asn177 provides a ligand contact to NAD(+). Substrate contacts are provided by residues 186-191, 202-204, Arg211, Asn246, and 269-273; these read KFIPRQ, KLY, and DRVGH.

The protein belongs to the NAD(P)-dependent epimerase/dehydratase family. dTDP-glucose dehydratase subfamily. Homodimer. It depends on NAD(+) as a cofactor.

It catalyses the reaction dTDP-alpha-D-glucose = dTDP-4-dehydro-6-deoxy-alpha-D-glucose + H2O. Its pathway is carbohydrate biosynthesis; dTDP-L-rhamnose biosynthesis. Its function is as follows. Catalyzes the dehydration of dTDP-D-glucose to form dTDP-6-deoxy-D-xylo-4-hexulose via a three-step process involving oxidation, dehydration and reduction. Involved in the biosynthesis of the dTDP-L-rhamnose which is a component of the critical linker, D-N-acetylglucosamine-L-rhamnose disaccharide, which connects the galactan region of arabinogalactan to peptidoglycan via a phosphodiester linkage. This Mycobacterium tuberculosis (strain CDC 1551 / Oshkosh) protein is dTDP-glucose 4,6-dehydratase (rmlB).